The following is a 301-amino-acid chain: Glycine--tRNA ligase alpha subunit (301 aa).

Belongs to the class-II aminoacyl-tRNA synthetase family. In terms of assembly, tetramer of two alpha and two beta subunits.

It is found in the cytoplasm. The catalysed reaction is tRNA(Gly) + glycine + ATP = glycyl-tRNA(Gly) + AMP + diphosphate. The polypeptide is Glycine--tRNA ligase alpha subunit (Alteromonas mediterranea (strain DSM 17117 / CIP 110805 / LMG 28347 / Deep ecotype)).